A 195-amino-acid chain; its full sequence is Myosin regulatory light chain, striated muscle, 25 kDa isoform (195 aa).

Basic and acidic residues predominate over residues 1-17 (AKDKEKKEKKDKKKDDA). The interval 1–39 (AKDKEKKEKKDKKKDDAPAEEAPAAAAAPAEEAAPTPSA) is disordered. The span at 20–39 (EEAPAAAAAPAEEAAPTPSA) shows a compositional bias: low complexity. EF-hand domains lie at 55–90 (NQIQEFKEAFTMIDQDRDGIIGPDDLGNIFQQIGRE) and 124–159 (DTEGTLRDAFALFDEDKLGYLLEEYVKDLLTNVGDQ). Residues Asp-68, Asp-70, Asp-72, and Asp-79 each coordinate Ca(2+).

Myosin is a hexamer of 2 heavy chains and 4 light chains.

Its function is as follows. Plays an important role in regulation of muscle cell contractile activity. The protein is Myosin regulatory light chain, striated muscle, 25 kDa isoform of Lumbricus terrestris (Common earthworm).